Here is a 526-residue protein sequence, read N- to C-terminus: Putative ankyrin repeat protein R840 (526 aa).

ANK repeat units follow at residues 78 to 107 (TLNE…NIRS), 108 to 137 (RDNF…DIRS), 139 to 167 (KNYA…NIRD), 169 to 197 (DNCA…DSTS), 198 to 227 (NFNE…RCRN), 229 to 255 (SAII…NIRI), 256 to 285 (DDDY…NIRS), 286 to 315 (EIDH…DIKS), 317 to 345 (YDRS…NIRN), 346 to 375 (INDY…NIRV), 376 to 405 (DNDS…DIRV), 406 to 435 (NNYQ…NVSI), 437 to 467 (NVPL…DINL), 468 to 497 (ADDM…NVRA), and 499 to 526 (NDYA…AILS).

The chain is Putative ankyrin repeat protein R840 from Acanthamoeba polyphaga (Amoeba).